The sequence spans 340 residues: uncharacterized protein (340 aa).

A signal peptide spans 1-20 (MGGARRLKLDGSIPNQLARA).

This is an uncharacterized protein from Mycobacterium tuberculosis (strain CDC 1551 / Oshkosh).